A 158-amino-acid polypeptide reads, in one-letter code: 2-C-methyl-D-erythritol 2,4-cyclodiphosphate synthase (158 aa).

A divalent metal cation contacts are provided by Asp9 and His11. 4-CDP-2-C-methyl-D-erythritol 2-phosphate-binding positions include 9–11 (DVH) and 35–36 (HS). An a divalent metal cation-binding site is contributed by His43. 4-CDP-2-C-methyl-D-erythritol 2-phosphate contacts are provided by residues 57–59 (DIG), 62–66 (FPDTD), 101–107 (AQKPKMA), 133–136 (TTTE), Phe140, and Arg143.

It belongs to the IspF family. In terms of assembly, homotrimer. A divalent metal cation is required as a cofactor.

The enzyme catalyses 4-CDP-2-C-methyl-D-erythritol 2-phosphate = 2-C-methyl-D-erythritol 2,4-cyclic diphosphate + CMP. It functions in the pathway isoprenoid biosynthesis; isopentenyl diphosphate biosynthesis via DXP pathway; isopentenyl diphosphate from 1-deoxy-D-xylulose 5-phosphate: step 4/6. Its function is as follows. Involved in the biosynthesis of isopentenyl diphosphate (IPP) and dimethylallyl diphosphate (DMAPP), two major building blocks of isoprenoid compounds. Catalyzes the conversion of 4-diphosphocytidyl-2-C-methyl-D-erythritol 2-phosphate (CDP-ME2P) to 2-C-methyl-D-erythritol 2,4-cyclodiphosphate (ME-CPP) with a corresponding release of cytidine 5-monophosphate (CMP). This Bacillus velezensis (strain DSM 23117 / BGSC 10A6 / LMG 26770 / FZB42) (Bacillus amyloliquefaciens subsp. plantarum) protein is 2-C-methyl-D-erythritol 2,4-cyclodiphosphate synthase.